The sequence spans 59 residues: UPF0434 protein RHOS4_00640 (59 aa).

The protein belongs to the UPF0434 family.

The chain is UPF0434 protein RHOS4_00640 from Cereibacter sphaeroides (strain ATCC 17023 / DSM 158 / JCM 6121 / CCUG 31486 / LMG 2827 / NBRC 12203 / NCIMB 8253 / ATH 2.4.1.) (Rhodobacter sphaeroides).